We begin with the raw amino-acid sequence, 186 residues long: Der GTPase-activating protein YihI (186 aa).

Residues 1-65 are disordered; the sequence is MARTKKTRRI…AGSRHSAVDT (65 aa). 2 stretches are compositionally biased toward basic and acidic residues: residues 9-25 and 34-45; these read RITD…RPEN and TRYELDAKSREE.

This sequence belongs to the YihI family. As to quaternary structure, interacts with Der.

A GTPase-activating protein (GAP) that modifies Der/EngA GTPase function. May play a role in ribosome biogenesis. The sequence is that of Der GTPase-activating protein YihI from Histophilus somni (strain 129Pt) (Haemophilus somnus).